A 508-amino-acid chain; its full sequence is MHMSKSFLLISMGLASISVHAQTLTRDNGAPVGDNQNSITAGENGSVLLQDVHLIQKLQRFARERIPERVVHARGTGAHGEFVASGDFSDLTLSSPFAQSGKVTPVFVRFSTVIHSKGSPETLRDPRGFATKFYTDQGNWDLVGNNLPVFFIRDSIKFPDMVHSLKPSPVTNLQDPNRFFDFFSSQPSATNMLTWVYTNLGTPASYRTMDGFGVHAYKWINQKGEVNYVKFHWKSQQGVKSLRPAEVTKVQGEDFNHLTNDLYTQINAGNFPKWDLYVKVLSPKALSKLDYNGLDATKVWLDVPEKKVGTMTLNRVPDNFFLETEQSAFAPSNIIPGIEPSEDRLLQGRLFAYADTQLYRLGANLFQLPVNSPKSPVANHNQDGPSNNSTGLGNVDSLDVNYEPSRLVNLTVDKQARAVETPLSGHVQQQAIRNPRDFFQAGVLYRSLSEQDKADLIHNLSGDLNKVNDAEVKAIMVSYFYRADKEYGTRLAKATDVNLKQVTKLASM.

A signal peptide spans 1 to 21 (MHMSKSFLLISMGLASISVHA). Catalysis depends on residues H72 and N145. Position 353 (Y353) interacts with heme. A compositionally biased stretch (polar residues) spans 373-392 (PKSPVANHNQDGPSNNSTGL). The tract at residues 373–396 (PKSPVANHNQDGPSNNSTGLGNVD) is disordered.

Belongs to the catalase family. Heme serves as cofactor.

It is found in the periplasm. It catalyses the reaction 2 H2O2 = O2 + 2 H2O. In terms of biological role, decomposes hydrogen peroxide into water and oxygen; serves to protect cells from the toxic effects of hydrogen peroxide. This chain is Catalase, found in Vibrio vulnificus (strain YJ016).